The following is a 208-amino-acid chain: Uracil phosphoribosyltransferase (208 aa).

Residues Arg78, Arg103, and Asp130–Ser138 each bind 5-phospho-alpha-D-ribose 1-diphosphate. Uracil contacts are provided by residues Ile193 and Gly198–Ala200. A 5-phospho-alpha-D-ribose 1-diphosphate-binding site is contributed by Asp199.

This sequence belongs to the UPRTase family. Mg(2+) is required as a cofactor.

The catalysed reaction is UMP + diphosphate = 5-phospho-alpha-D-ribose 1-diphosphate + uracil. It participates in pyrimidine metabolism; UMP biosynthesis via salvage pathway; UMP from uracil: step 1/1. Its activity is regulated as follows. Allosterically activated by GTP. Its function is as follows. Catalyzes the conversion of uracil and 5-phospho-alpha-D-ribose 1-diphosphate (PRPP) to UMP and diphosphate. In Trichlorobacter lovleyi (strain ATCC BAA-1151 / DSM 17278 / SZ) (Geobacter lovleyi), this protein is Uracil phosphoribosyltransferase.